A 425-amino-acid chain; its full sequence is Pre-mRNA-splicing factor RBM22 (425 aa).

The C3H1-type zinc finger occupies 159-186 (RNRPHICSFWVKGECKRGEECPYRHEKP). An RRM domain is found at 232 to 305 (TTLYIGGLGE…RRLNVKWGRS (74 aa)). Disordered stretches follow at residues 304–331 (RSQAARGKGEKDGVTESGIRLEPVPGLP) and 384–425 (HTMD…HGGP). Pro residues predominate over residues 389-399 (MAPPVPPPMAL).

The protein belongs to the SLT11 family. As to quaternary structure, component of the pre-catalytic and catalytic spliceosome complexes. Component of the postcatalytic spliceosome P complex.

The protein localises to the nucleus. It is found in the cytoplasm. Its function is as follows. Required for pre-mRNA splicing as component of the activated spliceosome. Involved in the first step of pre-mRNA splicing. Binds directly to the internal stem-loop (ISL) domain of the U6 snRNA and to the pre-mRNA intron near the 5' splice site during the activation and catalytic phases of the spliceosome cycle. Required for normal early embryogenesis. The polypeptide is Pre-mRNA-splicing factor RBM22 (rbm22) (Danio rerio (Zebrafish)).